Here is a 333-residue protein sequence, read N- to C-terminus: Photosystem II assembly lipoprotein Ycf48 (333 aa).

A signal peptide spans 1–23; the sequence is MTRFVSSAINLLLVLVLGVSLSG. Cys-24 carries N-palmitoyl cysteine lipidation. The S-diacylglycerol cysteine moiety is linked to residue Cys-24.

The protein belongs to the Ycf48 family. Part of early PSII assembly complexes which includes D1 (psbA) and PsbI; not found in mature PSII. Binds to the lumenal side of PSII complexes. Interacts with YidC.

It localises to the cellular thylakoid membrane. Functionally, a factor required for optimal assembly of photosystem II (PSII), acting in the early stages of PSII assembly. Also plays a role in replacement of photodamaged D1 (psbA). Assists YidC in synthesis of chlorophyll-binding proteins. This Parasynechococcus marenigrum (strain WH8102) protein is Photosystem II assembly lipoprotein Ycf48.